A 407-amino-acid chain; its full sequence is Myeloid cell nuclear differentiation antigen (407 aa).

Positions 1-88 (MANEYKKILL…VNNLRKERSK (88 aa)) constitute a Pyrin domain. The tract at residues 122–211 (LTSEVGERIP…TRRNVPQKDP (90 aa)) is disordered. The Nuclear localization signal signature appears at 131–137 (PVAQKRK). Positions 177–199 (HTSSSTPSNTSFAQNQQTQAQCQ) are enriched in low complexity. The region spanning 196-394 (AQCQVDTRRN…CGSHSFIKVI (199 aa)) is the HIN-200 domain.

Participates in a ternary complex with YY1 and the YY1 target DNA element. Binds nucleolin and nucleophosmin/NPM/B23.

It localises to the nucleus. The protein resides in the cytoplasm. In terms of biological role, may act as a transcriptional activator/repressor in the myeloid lineage. Plays a role in the granulocyte/monocyte cell-specific response to interferon. Stimulates the DNA binding of the transcriptional repressor protein YY1. This Macaca fascicularis (Crab-eating macaque) protein is Myeloid cell nuclear differentiation antigen (MNDA).